A 104-amino-acid chain; its full sequence is Small ribosomal subunit protein bS18c (104 aa).

It belongs to the bacterial ribosomal protein bS18 family. As to quaternary structure, part of the 30S ribosomal subunit.

The protein resides in the plastid. The protein localises to the chloroplast. The sequence is that of Small ribosomal subunit protein bS18c from Lotus japonicus (Lotus corniculatus var. japonicus).